A 601-amino-acid chain; its full sequence is Elongation factor 4 (601 aa).

In terms of domain architecture, tr-type G spans 7–189 (ELIRNFSIIA…ALVTRLPPPK (183 aa)). GTP is bound by residues 19-24 (DHGKST) and 136-139 (NKID).

Belongs to the TRAFAC class translation factor GTPase superfamily. Classic translation factor GTPase family. LepA subfamily.

It is found in the cell inner membrane. The catalysed reaction is GTP + H2O = GDP + phosphate + H(+). In terms of biological role, required for accurate and efficient protein synthesis under certain stress conditions. May act as a fidelity factor of the translation reaction, by catalyzing a one-codon backward translocation of tRNAs on improperly translocated ribosomes. Back-translocation proceeds from a post-translocation (POST) complex to a pre-translocation (PRE) complex, thus giving elongation factor G a second chance to translocate the tRNAs correctly. Binds to ribosomes in a GTP-dependent manner. The chain is Elongation factor 4 from Acidiphilium cryptum (strain JF-5).